Here is a 268-residue protein sequence, read N- to C-terminus: Tryptophan synthase alpha chain (268 aa).

Active-site proton acceptor residues include glutamate 49 and aspartate 60.

Belongs to the TrpA family. Tetramer of two alpha and two beta chains.

It catalyses the reaction (1S,2R)-1-C-(indol-3-yl)glycerol 3-phosphate + L-serine = D-glyceraldehyde 3-phosphate + L-tryptophan + H2O. The protein operates within amino-acid biosynthesis; L-tryptophan biosynthesis; L-tryptophan from chorismate: step 5/5. In terms of biological role, the alpha subunit is responsible for the aldol cleavage of indoleglycerol phosphate to indole and glyceraldehyde 3-phosphate. This Escherichia coli O7:K1 (strain IAI39 / ExPEC) protein is Tryptophan synthase alpha chain.